Consider the following 85-residue polypeptide: Large ribosomal subunit protein bL27 (85 aa).

Positions 1-22 (MAHKKAGGSSRNGRDSHSKRLG) are disordered.

The protein belongs to the bacterial ribosomal protein bL27 family.

This chain is Large ribosomal subunit protein bL27, found in Nitrosomonas europaea (strain ATCC 19718 / CIP 103999 / KCTC 2705 / NBRC 14298).